A 61-amino-acid chain; its full sequence is Large ribosomal subunit protein bL32 (61 aa).

The protein belongs to the bacterial ribosomal protein bL32 family.

This Cytophaga hutchinsonii (strain ATCC 33406 / DSM 1761 / CIP 103989 / NBRC 15051 / NCIMB 9469 / D465) protein is Large ribosomal subunit protein bL32.